Reading from the N-terminus, the 156-residue chain is Methylated-DNA--protein-cysteine methyltransferase (156 aa).

Catalysis depends on C120, which acts as the Nucleophile; methyl group acceptor.

This sequence belongs to the MGMT family.

The protein resides in the cytoplasm. The catalysed reaction is a 6-O-methyl-2'-deoxyguanosine in DNA + L-cysteinyl-[protein] = S-methyl-L-cysteinyl-[protein] + a 2'-deoxyguanosine in DNA. It carries out the reaction a 4-O-methyl-thymidine in DNA + L-cysteinyl-[protein] = a thymidine in DNA + S-methyl-L-cysteinyl-[protein]. Involved in the cellular defense against the biological effects of O6-methylguanine (O6-MeG) and O4-methylthymine (O4-MeT) in DNA. Repairs the methylated nucleobase in DNA by stoichiometrically transferring the methyl group to a cysteine residue in the enzyme. This is a suicide reaction: the enzyme is irreversibly inactivated. This chain is Methylated-DNA--protein-cysteine methyltransferase, found in Sulfurisphaera tokodaii (strain DSM 16993 / JCM 10545 / NBRC 100140 / 7) (Sulfolobus tokodaii).